A 267-amino-acid chain; its full sequence is 2-keto-3-deoxy-L-rhamnonate aldolase (267 aa).

His49 functions as the Proton acceptor in the catalytic mechanism. Residue Gln151 participates in substrate binding. Glu153 contributes to the Mg(2+) binding site. Ala178 and Asp179 together coordinate substrate. Residue Asp179 participates in Mg(2+) binding.

Belongs to the HpcH/HpaI aldolase family. KDR aldolase subfamily. Homohexamer. The cofactor is Mg(2+).

It carries out the reaction 2-dehydro-3-deoxy-L-rhamnonate = (S)-lactaldehyde + pyruvate. In terms of biological role, catalyzes the reversible retro-aldol cleavage of 2-keto-3-deoxy-L-rhamnonate (KDR) to pyruvate and lactaldehyde. This is 2-keto-3-deoxy-L-rhamnonate aldolase from Shigella sonnei (strain Ss046).